Reading from the N-terminus, the 464-residue chain is tRNA modification GTPase MnmE (464 aa).

(6S)-5-formyl-5,6,7,8-tetrahydrofolate contacts are provided by arginine 25, glutamate 87, and lysine 130. The TrmE-type G domain occupies 226–386 (GLSVVLAGQP…LRAELLRIAG (161 aa)). Asparagine 236 serves as a coordination point for K(+). Residues 236–241 (NVGKSS), 255–261 (TPIAGTT), and 280–283 (DTAG) each bind GTP. Position 240 (serine 240) interacts with Mg(2+). Positions 255, 257, and 260 each coordinate K(+). Residue threonine 261 participates in Mg(2+) binding. Residue lysine 464 participates in (6S)-5-formyl-5,6,7,8-tetrahydrofolate binding.

Belongs to the TRAFAC class TrmE-Era-EngA-EngB-Septin-like GTPase superfamily. TrmE GTPase family. In terms of assembly, homodimer. Heterotetramer of two MnmE and two MnmG subunits. The cofactor is K(+).

Its subcellular location is the cytoplasm. Its function is as follows. Exhibits a very high intrinsic GTPase hydrolysis rate. Involved in the addition of a carboxymethylaminomethyl (cmnm) group at the wobble position (U34) of certain tRNAs, forming tRNA-cmnm(5)s(2)U34. This Burkholderia lata (strain ATCC 17760 / DSM 23089 / LMG 22485 / NCIMB 9086 / R18194 / 383) protein is tRNA modification GTPase MnmE.